The chain runs to 251 residues: Imidazole glycerol phosphate synthase subunit HisF (251 aa).

Active-site residues include Asp-12 and Asp-131.

This sequence belongs to the HisA/HisF family. Heterodimer of HisH and HisF.

The protein resides in the cytoplasm. The catalysed reaction is 5-[(5-phospho-1-deoxy-D-ribulos-1-ylimino)methylamino]-1-(5-phospho-beta-D-ribosyl)imidazole-4-carboxamide + L-glutamine = D-erythro-1-(imidazol-4-yl)glycerol 3-phosphate + 5-amino-1-(5-phospho-beta-D-ribosyl)imidazole-4-carboxamide + L-glutamate + H(+). Its pathway is amino-acid biosynthesis; L-histidine biosynthesis; L-histidine from 5-phospho-alpha-D-ribose 1-diphosphate: step 5/9. Functionally, IGPS catalyzes the conversion of PRFAR and glutamine to IGP, AICAR and glutamate. The HisF subunit catalyzes the cyclization activity that produces IGP and AICAR from PRFAR using the ammonia provided by the HisH subunit. The protein is Imidazole glycerol phosphate synthase subunit HisF of Helicobacter hepaticus (strain ATCC 51449 / 3B1).